Here is a 117-residue protein sequence, read N- to C-terminus: Basic phospholipase A2 pseudexin B chain (117 aa).

Intrachain disulfides connect Cys-11/Cys-71, Cys-27/Cys-117, Cys-29/Cys-45, Cys-44/Cys-98, Cys-51/Cys-91, Cys-60/Cys-84, and Cys-78/Cys-89. Tyr-28, Gly-30, and Gly-32 together coordinate Ca(2+). The active site involves His-48. Residue Asp-49 participates in Ca(2+) binding. Asp-92 is a catalytic residue.

It belongs to the phospholipase A2 family. Group I subfamily. D49 sub-subfamily. Ca(2+) is required as a cofactor. Expressed by the venom gland.

Its subcellular location is the secreted. It catalyses the reaction a 1,2-diacyl-sn-glycero-3-phosphocholine + H2O = a 1-acyl-sn-glycero-3-phosphocholine + a fatty acid + H(+). Functionally, PLA2 catalyzes the calcium-dependent hydrolysis of the 2-acyl groups in 3-sn-phosphoglycerides. The sequence is that of Basic phospholipase A2 pseudexin B chain from Pseudechis porphyriacus (Red-bellied black snake).